The primary structure comprises 320 residues: Reticulocalbin-2 (320 aa).

The signal sequence occupies residues 1 to 25 (MRLGPRPAALGLLLPLLLYAAVAGA). EF-hand domains follow at residues 64-99 (EQQR…SFKH) and 100-135 (YAMQ…RVID). 8 residues coordinate Ca(2+): aspartate 77, aspartate 79, aspartate 81, glutamate 88, aspartate 113, asparagine 115, aspartate 117, and glutamate 124. A Phosphothreonine modification is found at threonine 140. EF-hand domains lie at 150-185 (FRQL…HPEE), 189-224 (MTEF…DPTA), 230-265 (WILV…NNQG), and 266-301 (IAQE…FLTS). Ca(2+) is bound by residues aspartate 167, glutamate 176, aspartate 202, asparagine 204, aspartate 206, glutamate 213, aspartate 243, aspartate 245, aspartate 247, arginine 249, glutamate 254, aspartate 279, asparagine 281, aspartate 283, lysine 285, and glutamate 290. The short motif at 317-320 (HDEL) is the Prevents secretion from ER element.

This sequence belongs to the CREC family.

It is found in the endoplasmic reticulum lumen. Its function is as follows. Not known. Binds calcium. In Mus musculus (Mouse), this protein is Reticulocalbin-2 (Rcn2).